The following is a 310-amino-acid chain: Vomeronasal type-1 receptor 53 (310 aa).

Residues 1–20 (MNKANLLHTDINLKITLFSE) are Extracellular-facing. The chain crosses the membrane as a helical span at residues 21–41 (VSVGISANSILIFAHLCMLLG). The Cytoplasmic segment spans residues 42-50 (ENRPKPIDL). Residues 51 to 71 (YIAFFSLTQLMLLITMGLIAV) form a helical membrane-spanning segment. The Extracellular portion of the chain corresponds to 72-93 (DMFMPWGRWDSTTCQSLIYLHR). An intrachain disulfide couples C85 to C172. A helical transmembrane segment spans residues 94 to 114 (LLRGLTLSATCLLNVLWTITL). At 115–134 (SPRSSCLTKFKHKSLQHISC) the chain is on the cytoplasmic side. A helical transmembrane segment spans residues 135–155 (AFLFLCVLYMSFNSHLFISII). The Extracellular portion of the chain corresponds to 156-183 (AYPNLTLENFMYVTQSCSLIPLSYFRKS). N-linked (GlcNAc...) asparagine glycosylation is present at N159. The helical transmembrane segment at 184–204 (MFSIPMAIREALLIGLMALSG) threads the bilayer. Over 205–238 (GYMVAHLWRHKKQAQHLHRTSLSSKASPEQRATR) the chain is Cytoplasmic. Residues 239–259 (TIMLLMSFFVVLYILDLVIFH) form a helical membrane-spanning segment. Over 260-268 (SRMKFKDGS) the chain is Extracellular. A helical transmembrane segment spans residues 269–289 (ILYGVQIIVSHSYATVSPFVF). Residues 290 to 310 (ICTEKRITNFLRSMCGRIVNI) lie on the Cytoplasmic side of the membrane.

It belongs to the G-protein coupled receptor 1 family.

It is found in the cell membrane. In terms of biological role, putative pheromone receptor implicated in the regulation of social and reproductive behavior. The polypeptide is Vomeronasal type-1 receptor 53 (Vmn1r53) (Mus musculus (Mouse)).